A 436-amino-acid chain; its full sequence is ATP-sensitive inward rectifier potassium channel 14 (436 aa).

Topologically, residues 1 to 83 (MGLARALRRL…LSDLFTTCVD (83 aa)) are cytoplasmic. Residues 14-43 (LDSGDSRAGDEEEAGPGLCRNGWAPAPVQS) are disordered. Position 81 is an S-nitrosocysteine (Cys81). The helical transmembrane segment at 84–110 (VRWRWMCLLFSCSFLASWLLFGLAFWL) threads the bilayer. Residues 111–133 (IASLHGDLAAPPPPAPCFSHVAS) are Extracellular-facing. Positions 134–150 (FLAAFLFALETQTSIGY) form an intramembrane region, helical; Pore-forming. The short motif at 147 to 152 (SIGYGV) is the Selectivity filter element. Topologically, residues 151–159 (GVRSVTEEC) are extracellular. A helical transmembrane segment spans residues 160-187 (PAAVAAVVLQCIAGCVLDAFVVGAVMAK). At 188–436 (MAKPKKRNET…TPTLALTLPP (249 aa)) the chain is on the cytoplasmic side. Positions 400–418 (QEEDEDDETEEGNGVETED) are enriched in acidic residues. Residues 400 to 436 (QEEDEDDETEEGNGVETEDGAASPRVLTPTLALTLPP) form a disordered region. Residues 426-436 (LTPTLALTLPP) are compositionally biased toward low complexity.

It belongs to the inward rectifier-type potassium channel (TC 1.A.2.1) family. KCNJ14 subfamily. In terms of tissue distribution, expressed preferentially in retina.

Its subcellular location is the membrane. The enzyme catalyses K(+)(in) = K(+)(out). Its activity is regulated as follows. Channel activity is regulated by variations of cytosolic pH; channels are activated by alkaline and inhibited by acidic pH values. Inhibited by Ba(2+) and Cs(+) in a voltage-dependent manner; sensitivity to those inhibitors is lower than in other Kir channels. In terms of biological role, inward rectifier potassium channels are characterized by a greater tendency to allow potassium to flow into the cell rather than out of it. Their voltage dependence is regulated by the concentration of extracellular potassium; as external potassium is raised, the voltage range of the channel opening shifts to more positive voltages. This Homo sapiens (Human) protein is ATP-sensitive inward rectifier potassium channel 14 (KCNJ14).